A 255-amino-acid polypeptide reads, in one-letter code: Hydroxyacylglutathione hydrolase (255 aa).

Zn(2+) contacts are provided by His-56, His-58, Asp-60, His-61, His-114, Asp-133, and His-171.

Belongs to the metallo-beta-lactamase superfamily. Glyoxalase II family. In terms of assembly, monomer. Requires Zn(2+) as cofactor.

It catalyses the reaction an S-(2-hydroxyacyl)glutathione + H2O = a 2-hydroxy carboxylate + glutathione + H(+). It functions in the pathway secondary metabolite metabolism; methylglyoxal degradation; (R)-lactate from methylglyoxal: step 2/2. Functionally, thiolesterase that catalyzes the hydrolysis of S-D-lactoyl-glutathione to form glutathione and D-lactic acid. In Rhodopseudomonas palustris (strain BisB18), this protein is Hydroxyacylglutathione hydrolase.